The chain runs to 454 residues: MSDNDTIVAQATPPGRGGVGILRISGLKAREVAETVLGKLPKPRYADYLPFKDADGSVLDQGIALWFPGPNSFTGEDVLELQGHGGPVILDLLLKRILTIPGLRIARPGEFSERAFLNDKLDLAQAEAIADLIDASSEQAARSALNSLQGAFSARVNHLVEALTHLRIYVEAAIDFPDEEIDFLSDGKIEAQLNDVIADLDAVRAEARQGSLLREGMKVVIAGRPNAGKSSLLNALAGREAAIVTDIAGTTRDVLREHIHIDGMPLHIIDTAGLREASDEVERIGIERAWQEIEQADRVLFMVDGTTTDAVDPAEIWPEFIARLPAKLPITVVRNKADITGETLGMSEVNGHALIRLSARTGEGVEVLRNHLKQSMGFDTNMEGGFLARRRHLQALEQAAEHLQQGKAQLLGAWAGELLAEELRLAQQNLSEITGEFTSDDLLGRIFSSFCIGK.

(6S)-5-formyl-5,6,7,8-tetrahydrofolate is bound by residues arginine 23, glutamate 80, and lysine 120. Residues glycine 216–glycine 377 enclose the TrmE-type G domain. Asparagine 226 provides a ligand contact to K(+). GTP is bound by residues asparagine 226–serine 231, threonine 245–threonine 251, aspartate 270–glycine 273, asparagine 335–aspartate 338, and serine 358–arginine 360. Mg(2+) is bound at residue serine 230. K(+)-binding residues include threonine 245, isoleucine 247, and threonine 250. Threonine 251 contributes to the Mg(2+) binding site. Lysine 454 is a (6S)-5-formyl-5,6,7,8-tetrahydrofolate binding site.

The protein belongs to the TRAFAC class TrmE-Era-EngA-EngB-Septin-like GTPase superfamily. TrmE GTPase family. As to quaternary structure, homodimer. Heterotetramer of two MnmE and two MnmG subunits. It depends on K(+) as a cofactor.

It localises to the cytoplasm. Functionally, exhibits a very high intrinsic GTPase hydrolysis rate. Involved in the addition of a carboxymethylaminomethyl (cmnm) group at the wobble position (U34) of certain tRNAs, forming tRNA-cmnm(5)s(2)U34. The polypeptide is tRNA modification GTPase MnmE (Shigella sonnei (strain Ss046)).